A 311-amino-acid polypeptide reads, in one-letter code: HPr kinase/phosphorylase (311 aa).

Catalysis depends on residues H139 and K160. 154–161 (GQSGVGKS) contacts ATP. Mg(2+) is bound at residue S161. D178 acts as the Proton acceptor; for phosphorylation activity. Proton donor; for dephosphorylation activity in catalysis. Residues 202–211 (LEIRGIGIID) form an important for the catalytic mechanism of both phosphorylation and dephosphorylation region. Position 203 (E203) interacts with Mg(2+). The active site involves R244. An important for the catalytic mechanism of dephosphorylation region spans residues 265–270 (PVRPGR).

Belongs to the HPrK/P family. In terms of assembly, homohexamer. It depends on Mg(2+) as a cofactor.

The enzyme catalyses [HPr protein]-L-serine + ATP = [HPr protein]-O-phospho-L-serine + ADP + H(+). The catalysed reaction is [HPr protein]-O-phospho-L-serine + phosphate + H(+) = [HPr protein]-L-serine + diphosphate. In terms of biological role, catalyzes the ATP- as well as the pyrophosphate-dependent phosphorylation of a specific serine residue in HPr, a phosphocarrier protein of the phosphoenolpyruvate-dependent sugar phosphotransferase system (PTS). HprK/P also catalyzes the pyrophosphate-producing, inorganic phosphate-dependent dephosphorylation (phosphorolysis) of seryl-phosphorylated HPr (P-Ser-HPr). The two antagonistic activities of HprK/P are regulated by several intracellular metabolites, which change their concentration in response to the absence or presence of rapidly metabolisable carbon sources (glucose, fructose, etc.) in the growth medium. Therefore, by controlling the phosphorylation state of HPr, HPrK/P is a sensor enzyme that plays a major role in the regulation of carbon metabolism and sugar transport: it mediates carbon catabolite repression (CCR), and regulates PTS-catalyzed carbohydrate uptake and inducer exclusion. The chain is HPr kinase/phosphorylase from Exiguobacterium sp. (strain ATCC BAA-1283 / AT1b).